Here is a 98-residue protein sequence, read N- to C-terminus: Cell cycle protein GpsB (98 aa).

The stretch at 34–71 forms a coiled coil; sequence LDIVIKDYEAFQQELDELRQENARLKRQVEELQKRPTT.

It belongs to the GpsB family. In terms of assembly, forms polymers through the coiled coil domains. Interacts with PBP1, MreC and EzrA.

The protein resides in the cytoplasm. Its function is as follows. Divisome component that associates with the complex late in its assembly, after the Z-ring is formed, and is dependent on DivIC and PBP2B for its recruitment to the divisome. Together with EzrA, is a key component of the system that regulates PBP1 localization during cell cycle progression. Its main role could be the removal of PBP1 from the cell pole after pole maturation is completed. Also contributes to the recruitment of PBP1 to the division complex. Not essential for septum formation. This Geobacillus thermodenitrificans (strain NG80-2) protein is Cell cycle protein GpsB.